Consider the following 627-residue polypeptide: Neuronal acetylcholine receptor subunit alpha-4 (627 aa).

Positions Met1 to Ser28 are cleaved as a signal peptide. The Extracellular segment spans residues His29–Leu242. N-linked (GlcNAc...) asparagine glycosylation is present at Asn57. 2 residues coordinate Ca(2+): Val76 and Glu78. Residues Asn107 and Asn174 are each glycosylated (N-linked (GlcNAc...) asparagine). 2 cysteine pairs are disulfide-bonded: Cys161–Cys175 and Cys225–Cys226. A helical transmembrane segment spans residues Pro243 to Leu267. The S-palmitoyl cysteine moiety is linked to residue Cys271. The next 2 membrane-spanning stretches (helical) occupy residues Ile275–Thr293 and Tyr309–Val330. At His331 to Arg600 the chain is on the cytoplasmic side. Disordered regions lie at residues Pro382–Glu479 and Asp497–Pro559. Phosphoserine occurs at positions 424, 538, and 541. Residues Ile601–Leu619 form a helical membrane-spanning segment.

It belongs to the ligand-gated ion channel (TC 1.A.9) family. Acetylcholine receptor (TC 1.A.9.1) subfamily. Alpha-4/CHRNA4 sub-subfamily. As to quaternary structure, neuronal AChR is composed of two different types of subunits: alpha and beta. CHRNA4 forms heteropentameric neuronal acetylcholine receptors with CHRNB2 and CHRNB4, as well as CHRNA5 and CHRNB3 as accesory subunits. Found in two major stoichiometric forms, LS (low agonist sensitivity): (CHRNA4)3:(CHRNB2)2 and HS (high agonist sensitivity): (CHRNA4)2:(CHRNB2)3, the two stoichiometric forms differ in their unitary conductance, calcium permeability, ACh sensitivity and potentiation by divalent cation. Cells produce predominantly an (CHRNA4)3:(CHRNB2)2 nAChR. The (CHRNA4)2:(CHRNB2)3 expression is selectively up-regulated by nicotine and has lower single channel conductance and calcium permeability. In the striatum, also forms CHRNA4:CHRNA6:CHRNB2 complexes. Also found in the stoichiometric form: (CHRNA4:CHRNB2)2:CHRNB3. Interacts with RIC3; which is required for proper folding and assembly. Interacts with LYPD6.

It is found in the synaptic cell membrane. Its subcellular location is the cell membrane. The enzyme catalyses Ca(2+)(in) = Ca(2+)(out). It catalyses the reaction K(+)(in) = K(+)(out). It carries out the reaction Na(+)(in) = Na(+)(out). With respect to regulation, activated by a myriad of ligands such as acetylcholine, cytisine, nicotine, choline and epibatidine. Channel potentiation by calcium is stoichiometry-selective, CHRNA4:CHRNB2 nACh receptor is achieved by calcium association with topographically distinct sites framed by anionic residues within the CHRNA4 subunit and between the CHRNA4 and CHRNB2 subunits. nAChR activity is inhibited by the antagonist alpha-conotoxins BuIA, PnIA, GID and MII, small disulfide-constrained peptides from cone snails. Component of neuronal acetylcholine receptors (nAChRs) that function as pentameric, ligand-gated cation channels with high calcium permeability among other activities. nAChRs are excitatory neurotrasnmitter receptors formed by a collection of nAChR subunits known to mediate synaptic transmission in the nervous system and the neuromuscular junction. Each nAchR subunit confers differential attributes to channel properties, including activation, deactivation and desensitization kinetics, pH sensitivity, cation permeability, and binding to allosteric modulators. CHRNA4 forms heteropentameric neuronal acetylcholine receptors with CHRNB2 and CHRNB4, as well as CHRNA5 and CHRNB3 as accesory subunits. Is the most abundant nAChR subtype expressed in the central nervous system. Found in two major stoichiometric forms,(CHRNA4)3:(CHRNB2)2 and (CHRNA4)2:(CHRNB2)3, the two stoichiometric forms differ in their unitary conductance, calcium permeability, ACh sensitivity and potentiation by divalent cation. Involved in the modulation of calcium-dependent signaling pathways, influences the release of neurotransmitters, including dopamine, glutamate and GABA. This chain is Neuronal acetylcholine receptor subunit alpha-4 (CHRNA4), found in Pan troglodytes (Chimpanzee).